The chain runs to 580 residues: Arginine--tRNA ligase (580 aa).

Positions 123–133 (PNLAKEMHVGH) match the 'HIGH' region motif.

This sequence belongs to the class-I aminoacyl-tRNA synthetase family. Monomer.

The protein resides in the cytoplasm. The enzyme catalyses tRNA(Arg) + L-arginine + ATP = L-arginyl-tRNA(Arg) + AMP + diphosphate. This is Arginine--tRNA ligase from Pseudoalteromonas translucida (strain TAC 125).